Here is an 883-residue protein sequence, read N- to C-terminus: Lysine-specific demethylase JMJ29 (883 aa).

Disordered stretches follow at residues 30 to 62 (KPFMSKGSSPSSSSDSRKRKLSRAEDSDDSAVK) and 161 to 204 (RTHS…SRKQ). Over residues 34-43 (SKGSSPSSSS) the composition is skewed to low complexity. Composition is skewed to polar residues over residues 161–172 (RTHSLSANSPEN) and 184–204 (SPASNVSDSIQKNDCTSSRKQ). Residues Cys-209, Cys-212, Cys-223, Cys-226, Cys-232, Cys-235, Cys-252, Cys-255, Cys-338, Cys-341, Cys-363, and His-381 each contribute to the Zn(2+) site. Residues 209–256 (CHQCLKGERITLLICSECEKTMFCLQCIRKWYPNLSEDDVVEKCPLCR) form an RING-type; degenerate zinc finger. The B box-type; atypical zinc finger occupies 333–392 (DERVYCDHCATSIVDLHRSCPKCSYELCLKCCQEIREGSLSERPEMKFHYVDRGHRYMHG). The region spanning 632 to 863 (PRTGILNIAT…ECLRLTEEFR (232 aa)) is the JmjC domain. His-676 and Asp-678 together coordinate Fe cation. A disordered region spans residues 713-743 (NKVDKQSTEDCNEKEEEEEEELNMPEISSNE). Residues 722–735 (DCNEKEEEEEEELN) are compositionally biased toward acidic residues. The Nuclear localization signal signature appears at 755–762 (FRREDVPK). His-831 contacts Fe cation.

It belongs to the JARID1 histone demethylase family. Requires Fe(2+) as cofactor. As to expression, expressed in inflorescences, roots, siliques, leaves and stems.

Its subcellular location is the nucleus. Its function is as follows. May function as histone H3 lysine demethylase and be involved in regulation of gene expression. This is Lysine-specific demethylase JMJ29 from Arabidopsis thaliana (Mouse-ear cress).